Reading from the N-terminus, the 449-residue chain is TNF receptor-associated factor family protein DDB_G0272340 (449 aa).

The segment at 33 to 76 adopts an RING-type; degenerate zinc-finger fold; it reads CPICEECIMDVNKCEALQCKEGHVHCRLCWMKSLESKKECMTCR. TRAF-type zinc fingers lie at residues 133–187 and 189–251; these read GHIK…IDDS and VHYS…SELS. Positions 263 to 309 form a coiled coil; that stretch reads MEATIDQHICKFEKSEKEYKKLELEYNRLKDDFKILQSELKVIRELK. One can recognise an MATH domain in the interval 311–437; it reads NYQNKWVITN…QNSVTLNINI (127 aa).

Belongs to the TNF receptor-associated factor family. A subfamily.

Its subcellular location is the cytoplasm. In terms of biological role, probable adapter protein and signal transducer that links members of the tumor necrosis factor receptor family to different signaling pathways by association with the receptor cytoplasmic domain and kinases. The protein is TNF receptor-associated factor family protein DDB_G0272340 of Dictyostelium discoideum (Social amoeba).